The chain runs to 174 residues: MARRHKKSKSDVVQINPDATINYVMGILTGANAYIDGLLSGANMYNAWVMQEMSLEGKPIGTYKPDSLRDYIDNLKNTNPRLYSLMKTDPKVFIDELQKTGQLDAFLGATNYARLAKTDKYMIEAGRKYRDTVPSLVKSKSPDTGLAFLQQYAPYGGMTMARLGNILKTGVKVE.

This is an uncharacterized protein from Acidianus convivator (ABV).